The chain runs to 519 residues: Protein disulfide-isomerase A5 (519 aa).

An N-terminal signal peptide occupies residues 1-21 (MARAGPAWLLLAIWVVLPSWL). Intrachain disulfides connect C85-C94, C182-C185, C305-C308, and C426-C429. Thioredoxin domains lie at 134-261 (FLKD…NPQP), 270-384 (PWAD…NPEA), and 378-506 (WMQN…ALRE). A Prevents secretion from ER motif is present at residues 516–519 (KEEL).

This sequence belongs to the protein disulfide isomerase family. As to quaternary structure, interacts with CALR (via P-domain).

The protein resides in the endoplasmic reticulum lumen. It catalyses the reaction Catalyzes the rearrangement of -S-S- bonds in proteins.. The sequence is that of Protein disulfide-isomerase A5 (PDIA5) from Homo sapiens (Human).